The sequence spans 341 residues: Pyrophosphate--fructose 6-phosphate 1-phosphotransferase (341 aa).

Gly10 is a diphosphate binding site. Glu103 is a Mg(2+) binding site. Substrate contacts are provided by residues 125 to 127, Arg162, 169 to 171, Glu221, Arg265, and 271 to 274; these read TID, MGR, and HTQR. Asp127 functions as the Proton acceptor in the catalytic mechanism.

It belongs to the phosphofructokinase type A (PFKA) family. Mixed-substrate PFK group III subfamily. Homotetramer. The cofactor is Mg(2+).

It is found in the cytoplasm. It carries out the reaction beta-D-fructose 6-phosphate + diphosphate = beta-D-fructose 1,6-bisphosphate + phosphate + H(+). The protein operates within carbohydrate degradation; glycolysis; D-glyceraldehyde 3-phosphate and glycerone phosphate from D-glucose: step 3/4. With respect to regulation, non-allosteric. Catalyzes the phosphorylation of D-fructose 6-phosphate, the first committing step of glycolysis. Uses inorganic phosphate (PPi) as phosphoryl donor instead of ATP like common ATP-dependent phosphofructokinases (ATP-PFKs), which renders the reaction reversible, and can thus function both in glycolysis and gluconeogenesis. Consistently, PPi-PFK can replace the enzymes of both the forward (ATP-PFK) and reverse (fructose-bisphosphatase (FBPase)) reactions. The polypeptide is Pyrophosphate--fructose 6-phosphate 1-phosphotransferase (Amycolatopsis methanolica).